We begin with the raw amino-acid sequence, 655 residues long: Probable glucan endo-1,3-beta-glucosidase btgC (655 aa).

Disordered regions lie at residues 1–61 (MSGD…ATPG) and 89–114 (SGVDAFRDTDGGNFPAERGYNAPGSD). Topologically, residues 1 to 282 (MSGDPRSFSF…PKPGTGSRKR (282 aa)) are cytoplasmic. The segment covering 19-33 (DSSQQPLHPTNTMAD) has biased composition (polar residues). Residues 89–98 (SGVDAFRDTD) show a composition bias toward basic and acidic residues. A helical; Signal-anchor for type II membrane protein transmembrane segment spans residues 283 to 303 (GWIVGIILAVVIVGAIVGGAV). Over 304-655 (GGTLGNREKE…IPDCGGKTAT (352 aa)) the chain is Extracellular. A disordered region spans residues 305 to 338 (GTLGNREKESPSSSETASGDEKVNGDLGKDSDEI). A compositionally biased stretch (basic and acidic residues) spans 323 to 338 (GDEKVNGDLGKDSDEI). A glycan (N-linked (GlcNAc...) asparagine) is linked at Asn426. Glu458 (proton donor) is an active-site residue. Glu557 (nucleophile) is an active-site residue. N-linked (GlcNAc...) asparagine glycans are attached at residues Asn576 and Asn602.

This sequence belongs to the glycosyl hydrolase 17 family.

Its subcellular location is the cell membrane. The enzyme catalyses Hydrolysis of (1-&gt;3)-beta-D-glucosidic linkages in (1-&gt;3)-beta-D-glucans.. Functionally, glucanases play a role in cell expansion during growth, in cell-cell fusion during mating, and in spore release during sporulation. This enzyme may be involved in beta-glucan degradation. Active on laminarin and lichenan. The polypeptide is Probable glucan endo-1,3-beta-glucosidase btgC (btgC) (Aspergillus terreus (strain NIH 2624 / FGSC A1156)).